The primary structure comprises 289 residues: Protease HtpX (289 aa).

The next 2 membrane-spanning stretches (helical) occupy residues 6–26 and 38–58; these read ILFL…LNII and TGIL…SLFM. Histidine 144 contacts Zn(2+). Residue glutamate 145 is part of the active site. Histidine 148 contributes to the Zn(2+) binding site. Transmembrane regions (helical) follow at residues 152-172 and 194-214; these read GDMV…IFLS and LVFW…ATMI. Glutamate 223 is a binding site for Zn(2+).

This sequence belongs to the peptidase M48B family. Requires Zn(2+) as cofactor.

It is found in the cell inner membrane. The chain is Protease HtpX from Haemophilus ducreyi (strain 35000HP / ATCC 700724).